We begin with the raw amino-acid sequence, 384 residues long: Monomeric sarcosine oxidase (384 aa).

An FAD-binding site is contributed by 6 to 36; it reads DVIVIGLGGMGSAAAHHLSARGARVLGLEKF. At Cys315 the chain carries S-8alpha-FAD cysteine.

Belongs to the MSOX/MTOX family. MSOX subfamily. Monomer. Requires FAD as cofactor.

It is found in the cytoplasm. It catalyses the reaction sarcosine + O2 + H2O = formaldehyde + glycine + H2O2. In terms of biological role, catalyzes the oxidative demethylation of sarcosine. This Streptomyces avermitilis (strain ATCC 31267 / DSM 46492 / JCM 5070 / NBRC 14893 / NCIMB 12804 / NRRL 8165 / MA-4680) protein is Monomeric sarcosine oxidase.